Here is a 381-residue protein sequence, read N- to C-terminus: uncharacterized protein (381 aa).

9 consecutive transmembrane segments (helical) span residues 59–79, 84–104, 147–167, 190–210, 222–242, 250–270, 284–304, 311–331, and 344–364; these read LITL…LYYM, GVAP…YQTM, VGVN…FFMA, SMMA…FNTI, LVLL…TFSI, ILTN…SIYW, HYFM…LILA, LSPI…IYKF, and VYFF…VTSL.

Belongs to the CDP-alcohol phosphatidyltransferase class-I family.

The protein localises to the membrane. This is an uncharacterized protein from Dictyostelium discoideum (Social amoeba).